Consider the following 368-residue polypeptide: Homoserine O-acetyltransferase (368 aa).

Residues 43 to 346 (ILLEHALTGT…EYGHDAFLVE (304 aa)) form the AB hydrolase-1 domain. Residue S145 is the Nucleophile of the active site. Residue R212 participates in substrate binding. Residues D307 and H340 contribute to the active site. Residue D341 participates in substrate binding.

It belongs to the AB hydrolase superfamily. MetX family. In terms of assembly, homodimer.

The protein localises to the cytoplasm. The enzyme catalyses L-homoserine + acetyl-CoA = O-acetyl-L-homoserine + CoA. It participates in amino-acid biosynthesis; L-methionine biosynthesis via de novo pathway; O-acetyl-L-homoserine from L-homoserine: step 1/1. Transfers an acetyl group from acetyl-CoA to L-homoserine, forming acetyl-L-homoserine. This is Homoserine O-acetyltransferase from Listeria monocytogenes serovar 1/2a (strain ATCC BAA-679 / EGD-e).